We begin with the raw amino-acid sequence, 390 residues long: S-adenosylmethionine synthase 4 (390 aa).

Glu-9 contributes to the Mg(2+) binding site. His-15 provides a ligand contact to ATP. Residue Glu-43 coordinates K(+). L-methionine is bound by residues Glu-56 and Gln-99. ATP is bound by residues 167–169 (DGK), 235–238 (SGRF), Asp-246, 252–253 (RK), Ala-269, Lys-273, and Lys-277. An L-methionine-binding site is contributed by Asp-246. Residue Lys-277 participates in L-methionine binding.

It belongs to the AdoMet synthase family. As to quaternary structure, homotetramer. Requires Mn(2+) as cofactor. Mg(2+) is required as a cofactor. The cofactor is Co(2+). It depends on K(+) as a cofactor. As to expression, mostly expressed in flowers, seedpods and roots, and, to a lower extent, in stems and leaves.

The protein localises to the cytoplasm. The catalysed reaction is L-methionine + ATP + H2O = S-adenosyl-L-methionine + phosphate + diphosphate. It participates in amino-acid biosynthesis; S-adenosyl-L-methionine biosynthesis; S-adenosyl-L-methionine from L-methionine: step 1/1. Its function is as follows. Catalyzes the formation of S-adenosylmethionine from methionine and ATP. The reaction comprises two steps that are both catalyzed by the same enzyme: formation of S-adenosylmethionine (AdoMet) and triphosphate, and subsequent hydrolysis of the triphosphate. This chain is S-adenosylmethionine synthase 4 (MSAMS4), found in Brassica juncea (Indian mustard).